The following is a 190-amino-acid chain: Nuclear transcription factor Y subunit B-2 (190 aa).

The disordered stretch occupies residues 1–30 (MGDSDRDSGGGQNGNNQNGQSSLSPREQDR). Residues 32–38 (LPIANVS) mediate DNA binding. The tract at residues 59–70 (MQECVSEFISFV) is subunit association domain (SAD). Residues 168 to 190 (HMYGATGGGSDSGGGAASGRTRT) form a disordered region. Over residues 172–184 (ATGGGSDSGGGAA) the composition is skewed to gly residues.

Belongs to the NFYB/HAP3 subunit family. In terms of assembly, heterotrimeric transcription factor composed of three components, NF-YA, NF-YB and NF-YC. NF-YB and NF-YC must interact and dimerize for NF-YA association and DNA binding. Binds directly with DPB3-1. In terms of tissue distribution, ubiquitous. Predominantly expressed in flowers and siliques.

The protein resides in the nucleus. Its function is as follows. Component of the NF-Y/HAP transcription factor complex. The NF-Y complex stimulates the transcription of various genes by recognizing and binding to a CCAAT motif in promoters. This is Nuclear transcription factor Y subunit B-2 from Arabidopsis thaliana (Mouse-ear cress).